Reading from the N-terminus, the 68-residue chain is Large ribosomal subunit protein uL29 (68 aa).

The protein belongs to the universal ribosomal protein uL29 family.

In Albidiferax ferrireducens (strain ATCC BAA-621 / DSM 15236 / T118) (Rhodoferax ferrireducens), this protein is Large ribosomal subunit protein uL29.